The following is a 258-amino-acid chain: Acyl-[acyl-carrier-protein]--UDP-N-acetylglucosamine O-acyltransferase (258 aa).

This sequence belongs to the transferase hexapeptide repeat family. LpxA subfamily. Homotrimer.

The protein resides in the cytoplasm. It catalyses the reaction a (3R)-hydroxyacyl-[ACP] + UDP-N-acetyl-alpha-D-glucosamine = a UDP-3-O-[(3R)-3-hydroxyacyl]-N-acetyl-alpha-D-glucosamine + holo-[ACP]. The protein operates within glycolipid biosynthesis; lipid IV(A) biosynthesis; lipid IV(A) from (3R)-3-hydroxytetradecanoyl-[acyl-carrier-protein] and UDP-N-acetyl-alpha-D-glucosamine: step 1/6. Involved in the biosynthesis of lipid A, a phosphorylated glycolipid that anchors the lipopolysaccharide to the outer membrane of the cell. This chain is Acyl-[acyl-carrier-protein]--UDP-N-acetylglucosamine O-acyltransferase, found in Halorhodospira halophila (strain DSM 244 / SL1) (Ectothiorhodospira halophila (strain DSM 244 / SL1)).